The primary structure comprises 842 residues: ATP-binding cassette sub-family B member 6 (842 aa).

Residues 1–26 lie on the Lumenal side of the membrane; that stretch reads MVTVGNYCEAEGPLGPAWAQNGLSPC. The segment at 1–205 is required for the lysosomal targeting; that stretch reads MVTVGNYCEA…SGGLFILGLW (205 aa). The interval 1-236 is required for ATPase activity; sequence MVTVGNYCEA…RNQAQSTDRT (236 aa). Cysteine 8 and cysteine 26 are oxidised to a cystine. The chain crosses the membrane as a helical span at residues 27–47; that stretch reads FFFTLVPSTLMALGALALVLV. At 48-72 the chain is on the cytoplasmic side; it reads LPCRRRDVPSGTEELFWAADSRVAP. The chain crosses the membrane as a helical span at residues 73 to 93; it reads YALQLFLATLQVALPLAGLAG. Residues 94–106 are Lumenal-facing; it reads RVGTARGVRLPGY. The helical transmembrane segment at 107 to 127 threads the bilayer; sequence LLLASMLGSLASACGLWLLVA. The Cytoplasmic segment spans residues 128–147; that stretch reads ERRQARQSLAMGVWMKFRHS. A helical membrane pass occupies residues 148-168; that stretch reads SGLLLLWTVAFAAENLALVSW. Residues 169-185 lie on the Lumenal side of the membrane; sequence NSPQWWWARADLGQQVQ. Residues 186-206 form a helical membrane-spanning segment; the sequence is FGLWVLRYVISGGLFILGLWA. Over 207–263 the chain is Cytoplasmic; that stretch reads PGLRPQSYTLRVHEADQDVERNQAQSTDRTSTWRDLGRKLRLLSSYLWPRGSPALQF. A helical membrane pass occupies residues 264-284; that stretch reads IVLICLGLMGLDRALNVLVPI. Residues 265 to 556 enclose the ABC transmembrane type-1 domain; that stretch reads VLICLGLMGL…FGTYYRMIQT (292 aa). Over 285–305 the chain is Lumenal; sequence FYRDIVNLLTSKAPWSSLAWT. A helical transmembrane segment spans residues 306–326; that stretch reads VTTYVFLKFLQGGGTGSTGFV. Residues 327–375 lie on the Cytoplasmic side of the membrane; the sequence is SNLRTFLWIRVQQFTSRGVELRLFSHLHELSLRWHLGRRTGEVLRVVDR. The helical transmembrane segment at 376 to 396 threads the bilayer; sequence GTSSVTGLLSYLVFNIIPTLA. Position 397 (aspartate 397) is a topological domain, lumenal. Residues 398-418 traverse the membrane as a helical segment; the sequence is IIIGIIYFSMFFNAWFGLIVF. The Cytoplasmic portion of the chain corresponds to 419–499; it reads LCMSLYLFLT…SSASLVVLNQ (81 aa). The helical transmembrane segment at 500 to 520 threads the bilayer; sequence TQNLVIGLGLLAGSLLCAYFV. Residues 521–529 are Lumenal-facing; that stretch reads SEQKLQVGD. A helical transmembrane segment spans residues 530-550; it reads FVLFGTYITQLYMPLNWFGTY. Residues 551-842 lie on the Cytoplasmic side of the membrane; the sequence is YRMIQTNFID…SEDSKPQDIA (292 aa). The 235-residue stretch at 590 to 824 folds into the ABC transporter domain; it reads IEFENVHFSY…GGVYAEMWQL (235 aa). 623-630 serves as a coordination point for ATP; the sequence is GPSGAGKS.

This sequence belongs to the ABC transporter superfamily. ABCB family. Heavy Metal importer (TC 3.A.1.210) subfamily. As to quaternary structure, homodimer. N-glycosylated. Highly expressed in the liver, adrenal glands, and testis.

It localises to the cell membrane. The protein resides in the mitochondrion outer membrane. The protein localises to the endoplasmic reticulum membrane. Its subcellular location is the golgi apparatus membrane. It is found in the endosome membrane. It localises to the lysosome membrane. The protein resides in the late endosome membrane. The protein localises to the early endosome membrane. Its subcellular location is the secreted. It is found in the extracellular exosome. It localises to the mitochondrion. The protein resides in the endosome. The protein localises to the multivesicular body membrane. Its subcellular location is the melanosome membrane. The catalysed reaction is heme b(in) + ATP + H2O = heme b(out) + ADP + phosphate + H(+). It catalyses the reaction coproporphyrin III(in) + ATP + H2O = coproporphyrin III(out) + ADP + phosphate + H(+). The enzyme catalyses pheophorbide a(in) + ATP + H2O = pheophorbide a(out) + ADP + phosphate + H(+). It carries out the reaction coproporphyrinogen III(in) + ATP + H2O = coproporphyrinogen III(out) + ADP + phosphate + H(+). The catalysed reaction is protoporphyrin IX(in) + ATP + H2O = protoporphyrin IX(out) + ADP + phosphate + H(+). It catalyses the reaction coproporphyrin I(in) + ATP + H2O = coproporphyrin I(out) + ADP + phosphate + H(+). The enzyme catalyses uroporphyrin I(in) + ATP + H2O = uroporphyrin I(out) + ADP + phosphate + H(+). It carries out the reaction uroporphyrin III(in) + ATP + H2O = uroporphyrin III(out) + ADP + phosphate + H(+). Functionally, ATP-dependent transporter that catalyzes the transport of a broad-spectrum of porphyrins from the cytoplasm to the extracellular space through the plasma membrane or into the vesicle lumen. May also function as an ATP-dependent importer of porphyrins from the cytoplasm into the mitochondria, in turn may participate in the de novo heme biosynthesis regulation and in the coordination of heme and iron homeostasis during phenylhydrazine stress. May also play a key role in the early steps of melanogenesis producing PMEL amyloid fibrils. In vitro, it confers to cells a resistance to toxic metal such as arsenic and cadmium and against chemotherapeutics agent such as 5-fluorouracil, SN-38 and vincristin. In addition may play a role in the transition metal homeostasis. The chain is ATP-binding cassette sub-family B member 6 from Mesocricetus auratus (Golden hamster).